A 250-amino-acid chain; its full sequence is Ribosomal RNA small subunit methyltransferase J (250 aa).

S-adenosyl-L-methionine-binding positions include 101–102 (RD), 117–118 (ER), 153–154 (SS), and aspartate 171.

The protein belongs to the methyltransferase superfamily. RsmJ family.

Its subcellular location is the cytoplasm. It catalyses the reaction guanosine(1516) in 16S rRNA + S-adenosyl-L-methionine = N(2)-methylguanosine(1516) in 16S rRNA + S-adenosyl-L-homocysteine + H(+). Functionally, specifically methylates the guanosine in position 1516 of 16S rRNA. The polypeptide is Ribosomal RNA small subunit methyltransferase J (Escherichia coli (strain SMS-3-5 / SECEC)).